The primary structure comprises 1362 residues: Leptomycin B resistance protein pmd1 (1362 aa).

The tract at residues 1–45 (MSLHSKKSTSTVKDNEHSLDLSIKSIPSNEKNFSTEKSENEASES) is disordered. Residues 1 to 91 (MSLHSKKSTS…RILSYADKWD (91 aa)) lie on the Cytoplasmic side of the membrane. Basic and acidic residues predominate over residues 33–45 (FSTEKSENEASES). Transmembrane regions (helical) follow at residues 92–115 (IMLQ…MSLV), 138–162 (TVDH…IYTV), 220–237 (LVFF…IAFI), 244–264 (LILS…VPFI), 320–346 (AIAM…WEGG), and 354–374 (LDVS…YSLA). One can recognise an ABC transmembrane type-1 1 domain in the interval 95-385 (QLAGTITGIG…ISPKMQSFVS (291 aa)). Residues 375–788 (NISPKMQSFV…LWFIHSFVRT (414 aa)) lie on the Cytoplasmic side of the membrane. The 246-residue stretch at 420-665 (IELKNIRFVY…NGAYARLVEA (246 aa)) folds into the ABC transporter 1 domain. Residue 455–462 (GASGSGKS) participates in ATP binding. The interval 748 to 768 (LPPADVGELNEEPKKSKKSKK) is disordered. Transmembrane regions (helical) follow at residues 789–809 (MIEI…GAAY), 835–859 (VNVF…SNFA), 916–935 (LGTF…LSLA), 940–957 (LGLV…AGYY), 1022–1040 (GLFF…ALTF), and 1054–1072 (IVQF…QQAG). The ABC transmembrane type-1 2 domain maps to 795–1083 (LLIGILASMI…FFGYSADVTK (289 aa)). Topologically, residues 1073–1362 (QFFGYSADVT…LVVEQGLNKA (290 aa)) are cytoplasmic. The 238-residue stretch at 1119-1356 (IEFRQVEFSY…RGRYYELVVE (238 aa)) folds into the ABC transporter 2 domain. Residue 1154 to 1161 (GSSGCGKS) participates in ATP binding.

The protein belongs to the ABC transporter superfamily. ABCB family. Multidrug resistance exporter (TC 3.A.1.201) subfamily.

It is found in the membrane. In terms of biological role, may be a transmembrane transporter of the mating factor, namely P-factor or M-factor. Confers resistance to leptomycin B and to several other antifungal drugs. The polypeptide is Leptomycin B resistance protein pmd1 (pmd1) (Schizosaccharomyces pombe (strain 972 / ATCC 24843) (Fission yeast)).